The chain runs to 591 residues: L-fucose isomerase (591 aa).

Active-site proton acceptor residues include Glu-338 and Asp-362. The Mn(2+) site is built by Glu-338, Asp-362, and His-529.

It belongs to the L-fucose isomerase family. Mn(2+) is required as a cofactor.

It is found in the cytoplasm. It carries out the reaction L-fucose = L-fuculose. It functions in the pathway carbohydrate degradation; L-fucose degradation; L-lactaldehyde and glycerone phosphate from L-fucose: step 1/3. Converts the aldose L-fucose into the corresponding ketose L-fuculose. The sequence is that of L-fucose isomerase from Bacteroides thetaiotaomicron (strain ATCC 29148 / DSM 2079 / JCM 5827 / CCUG 10774 / NCTC 10582 / VPI-5482 / E50).